A 275-amino-acid polypeptide reads, in one-letter code: Large ribosomal subunit protein uL2 (275 aa).

2 disordered regions span residues 28–48 (KPYAPLLEKKSKSGGRNNNGR) and 223–275 (VVMN…RNKK).

It belongs to the universal ribosomal protein uL2 family. In terms of assembly, part of the 50S ribosomal subunit. Forms a bridge to the 30S subunit in the 70S ribosome.

In terms of biological role, one of the primary rRNA binding proteins. Required for association of the 30S and 50S subunits to form the 70S ribosome, for tRNA binding and peptide bond formation. It has been suggested to have peptidyltransferase activity; this is somewhat controversial. Makes several contacts with the 16S rRNA in the 70S ribosome. This is Large ribosomal subunit protein uL2 from Photobacterium profundum (strain SS9).